A 331-amino-acid polypeptide reads, in one-letter code: tRNA N6-adenosine threonylcarbamoyltransferase (331 aa).

Residues histidine 108 and histidine 112 each contribute to the Fe cation site. Substrate-binding positions include 129 to 133, aspartate 161, glutamate 178, and serine 258; that span reads LVSGG. Position 286 (aspartate 286) interacts with Fe cation.

Belongs to the KAE1 / TsaD family. Fe(2+) serves as cofactor.

It is found in the cytoplasm. The enzyme catalyses L-threonylcarbamoyladenylate + adenosine(37) in tRNA = N(6)-L-threonylcarbamoyladenosine(37) in tRNA + AMP + H(+). Functionally, required for the formation of a threonylcarbamoyl group on adenosine at position 37 (t(6)A37) in tRNAs that read codons beginning with adenine. Is probably involved in the transfer of the threonylcarbamoyl moiety of threonylcarbamoyl-AMP (TC-AMP) to the N6 group of A37. This chain is tRNA N6-adenosine threonylcarbamoyltransferase, found in Caldivirga maquilingensis (strain ATCC 700844 / DSM 13496 / JCM 10307 / IC-167).